Reading from the N-terminus, the 382-residue chain is Succinate--CoA ligase [ADP-forming] subunit beta 1 (382 aa).

In terms of domain architecture, ATP-grasp spans 9–235; the sequence is KQIFAKHGIR…ATEEDPLERE (227 aa). Residues Lys-45, 52-54, Glu-91, Leu-94, and Glu-99 each bind ATP; that span reads GRG. Mg(2+) is bound by residues Asn-191 and Asp-204. Asn-255 is a binding site for substrate.

It belongs to the succinate/malate CoA ligase beta subunit family. Heterotetramer of two alpha and two beta subunits. Mg(2+) is required as a cofactor.

The enzyme catalyses succinate + ATP + CoA = succinyl-CoA + ADP + phosphate. It catalyses the reaction GTP + succinate + CoA = succinyl-CoA + GDP + phosphate. It functions in the pathway carbohydrate metabolism; tricarboxylic acid cycle; succinate from succinyl-CoA (ligase route): step 1/1. Functionally, succinyl-CoA synthetase functions in the citric acid cycle (TCA), coupling the hydrolysis of succinyl-CoA to the synthesis of either ATP or GTP and thus represents the only step of substrate-level phosphorylation in the TCA. The beta subunit provides nucleotide specificity of the enzyme and binds the substrate succinate, while the binding sites for coenzyme A and phosphate are found in the alpha subunit. In Archaeoglobus fulgidus (strain ATCC 49558 / DSM 4304 / JCM 9628 / NBRC 100126 / VC-16), this protein is Succinate--CoA ligase [ADP-forming] subunit beta 1.